We begin with the raw amino-acid sequence, 256 residues long: Hydroxyacylglutathione hydrolase (256 aa).

Zn(2+) contacts are provided by H53, H55, D57, H58, H111, D128, and H166.

It belongs to the metallo-beta-lactamase superfamily. Glyoxalase II family. As to quaternary structure, monomer. The cofactor is Zn(2+).

It carries out the reaction an S-(2-hydroxyacyl)glutathione + H2O = a 2-hydroxy carboxylate + glutathione + H(+). It functions in the pathway secondary metabolite metabolism; methylglyoxal degradation; (R)-lactate from methylglyoxal: step 2/2. Its function is as follows. Thiolesterase that catalyzes the hydrolysis of S-D-lactoyl-glutathione to form glutathione and D-lactic acid. This chain is Hydroxyacylglutathione hydrolase, found in Thiobacillus denitrificans (strain ATCC 25259 / T1).